Reading from the N-terminus, the 85-residue chain is Conotoxin Lt28.3 (85 aa).

Residues 1–21 (MPKLEMMLLVLLILPLCYIDA) form the signal peptide. Positions 22-40 (VGPLPPWNMEDEIIEHWQK) are excised as a propeptide.

The protein belongs to the conotoxin D superfamily. In terms of processing, contains 5 disulfide bonds. As to expression, expressed by the venom duct.

It is found in the secreted. Functionally, probable neurotoxin. This chain is Conotoxin Lt28.3, found in Conus litteratus (Lettered cone).